The following is a 362-amino-acid chain: UDP-N-acetylglucosamine--N-acetylmuramyl-(pentapeptide) pyrophosphoryl-undecaprenol N-acetylglucosamine transferase (362 aa).

UDP-N-acetyl-alpha-D-glucosamine-binding positions include 15 to 17 (TGG), asparagine 127, arginine 165, serine 191, isoleucine 247, 266 to 271 (ALTVSE), and glutamine 292.

The protein belongs to the glycosyltransferase 28 family. MurG subfamily.

It localises to the cell inner membrane. The enzyme catalyses di-trans,octa-cis-undecaprenyl diphospho-N-acetyl-alpha-D-muramoyl-L-alanyl-D-glutamyl-meso-2,6-diaminopimeloyl-D-alanyl-D-alanine + UDP-N-acetyl-alpha-D-glucosamine = di-trans,octa-cis-undecaprenyl diphospho-[N-acetyl-alpha-D-glucosaminyl-(1-&gt;4)]-N-acetyl-alpha-D-muramoyl-L-alanyl-D-glutamyl-meso-2,6-diaminopimeloyl-D-alanyl-D-alanine + UDP + H(+). The protein operates within cell wall biogenesis; peptidoglycan biosynthesis. In terms of biological role, cell wall formation. Catalyzes the transfer of a GlcNAc subunit on undecaprenyl-pyrophosphoryl-MurNAc-pentapeptide (lipid intermediate I) to form undecaprenyl-pyrophosphoryl-MurNAc-(pentapeptide)GlcNAc (lipid intermediate II). The polypeptide is UDP-N-acetylglucosamine--N-acetylmuramyl-(pentapeptide) pyrophosphoryl-undecaprenol N-acetylglucosamine transferase (Shewanella baltica (strain OS223)).